Reading from the N-terminus, the 184-residue chain is uncharacterized protein (184 aa).

The interval 1–24 (MGISDQINSNLSSQSPFTVSTNPS) is disordered.

This is an uncharacterized protein from Dictyostelium discoideum (Social amoeba).